Reading from the N-terminus, the 119-residue chain is Acidic phospholipase A2 DE-III (119 aa).

Disulfide bonds link cysteine 11-cysteine 72, cysteine 26-cysteine 118, cysteine 28-cysteine 44, cysteine 43-cysteine 99, cysteine 50-cysteine 92, cysteine 60-cysteine 85, and cysteine 79-cysteine 90. The Ca(2+) site is built by tyrosine 27, glycine 29, and glycine 31. Residue histidine 47 is part of the active site. Aspartate 48 contributes to the Ca(2+) binding site. The active site involves aspartate 93.

This sequence belongs to the phospholipase A2 family. Group I subfamily. D49 sub-subfamily. Ca(2+) serves as cofactor. As to expression, expressed by the venom gland.

The protein localises to the secreted. It catalyses the reaction a 1,2-diacyl-sn-glycero-3-phosphocholine + H2O = a 1-acyl-sn-glycero-3-phosphocholine + a fatty acid + H(+). In terms of biological role, PLA2 catalyzes the calcium-dependent hydrolysis of the 2-acyl groups in 3-sn-phosphoglycerides. The polypeptide is Acidic phospholipase A2 DE-III (Naja melanoleuca (Forest cobra)).